Here is a 757-residue protein sequence, read N- to C-terminus: Polyribonucleotide nucleotidyltransferase (757 aa).

2 residues coordinate Mg(2+): Asp489 and Asp495. Positions 556–615 constitute a KH domain; it reads PKILCYKIDKDVVHKVIGSGGKTIRGISSDTSAKIDIDQNNYVYIMADTEEALMEAKTRV. In terms of domain architecture, S1 motif spans 632–700; it reads GELYDGKIVS…SDGKIKLTMR (69 aa). The segment at 702 to 757 is disordered; the sequence is DEDRVGSGGSSSSPKKRFGAHPRKNGKDNRSNNSERGFNERSGSAEGSSISRKRFF. The span at 715–725 shows a compositional bias: basic residues; sequence PKKRFGAHPRK. Residues 732-751 show a composition bias toward polar residues; it reads SNNSERGFNERSGSAEGSSI.

The protein belongs to the polyribonucleotide nucleotidyltransferase family. Mg(2+) is required as a cofactor.

Its subcellular location is the cytoplasm. It carries out the reaction RNA(n+1) + phosphate = RNA(n) + a ribonucleoside 5'-diphosphate. Involved in mRNA degradation. Catalyzes the phosphorolysis of single-stranded polyribonucleotides processively in the 3'- to 5'-direction. This Neorickettsia sennetsu (strain ATCC VR-367 / Miyayama) (Ehrlichia sennetsu) protein is Polyribonucleotide nucleotidyltransferase.